The sequence spans 182 residues: Nucleosome assembly protein 1-like 5 (182 aa).

A disordered region spans residues 1 to 71 (MADSENQGPA…APKPKNDFIE (71 aa)). Low complexity-rich tracts occupy residues 7–21 (QGPA…AAEA) and 28–49 (AEGG…SAAG). Residues 81–107 (VLALKKLQKRCDKIEAKFDKEFQALEK) adopt a coiled-coil conformation. The interval 134-182 (LEGEEEEEEEYEDDEEEGEDEEEEEAAAEAAAGAKHDDAHAEMPDDAKK) is disordered. The span at 135 to 160 (EGEEEEEEEYEDDEEEGEDEEEEEAA) shows a compositional bias: acidic residues. The segment covering 167–182 (AKHDDAHAEMPDDAKK) has biased composition (basic and acidic residues).

Belongs to the nucleosome assembly protein (NAP) family. Predominantly expressed in brain.

Its subcellular location is the nucleus. The polypeptide is Nucleosome assembly protein 1-like 5 (NAP1L5) (Homo sapiens (Human)).